The primary structure comprises 414 residues: Secernin-1 (414 aa).

This sequence belongs to the peptidase C69 family. Secernin subfamily.

The protein localises to the cytoplasm. Its function is as follows. Regulates exocytosis in mast cells. Increases both the extent of secretion and the sensitivity of mast cells to stimulation with calcium. The polypeptide is Secernin-1 (Scrn1) (Mus musculus (Mouse)).